Consider the following 497-residue polypeptide: MATQEAGKLEWRISVDNGTTERLVPRSGLSKRIFLWLKDLVMKVIMERVAKFMRKAWRIGADDPAKVVHCLKVGLALSLVSIFYYMRPLYDGVGGNAMWAIMTVVVVFESNVGATFCKCVNRVVATILAGSLGIAVHWVATQSGKAEVFVIGCSVFLFAFAATYSRFVPSFKARFDYGAMIFILTFSLVSVGGYRVDKLVELAQQRVSTIAIGTSICIIITVFFCPIWAGSQLHRLIERNLEKLADSLDGCVAEYFKENEVSTNRNEDENTNMKLQGFKCVLNSKGTEEAMPLIRFSGFSFSQANLARWEPAHGSFNFRHPWKLYVKIGAAMRRCAYCLENLSICINYETEAPDQVKNHFGEACMKLSSASSKILRELADMMKNTRKSSKMDFLVFDMNSAVQELQETLKNVPIETNKPEEVPSEEENKVDSEERTTSMSLHEVLPVATLVSLLIENAARIQTAVEAVDELANLADFEQDSKKKTGDNNTKQPPLSS.

Transmembrane regions (helical) follow at residues 66-86 (KVVH…FYYM), 88-108 (PLYD…VVVF), 123-143 (VVAT…ATQS), 148-168 (VFVI…SRFV), 173-193 (ARFD…SVGG), and 210-230 (IAIG…IWAG). Disordered stretches follow at residues 413–437 (PIET…ERTT) and 476–497 (DFEQ…PLSS). Positions 417 to 436 (NKPEEVPSEEENKVDSEERT) are enriched in basic and acidic residues. Residues 487–497 (DNNTKQPPLSS) are compositionally biased toward polar residues.

Belongs to the aromatic acid exporter (TC 2.A.85) family.

The protein resides in the membrane. Its function is as follows. Malate transporter. The sequence is that of Aluminum-activated malate transporter 10 (ALMT10) from Arabidopsis thaliana (Mouse-ear cress).